The primary structure comprises 327 residues: Spermidine/putrescine import ATP-binding protein PotA (327 aa).

The ABC transporter domain maps to 5–235 (IKVEAVEKHF…PKTLFVATFI (231 aa)). Position 37–44 (37–44 (GPSGCGKT)) interacts with ATP.

The protein belongs to the ABC transporter superfamily. Spermidine/putrescine importer (TC 3.A.1.11.1) family. The complex is composed of two ATP-binding proteins (PotA), two transmembrane proteins (PotB and PotC) and a solute-binding protein (PotD).

It is found in the cell membrane. The catalysed reaction is ATP + H2O + polyamine-[polyamine-binding protein]Side 1 = ADP + phosphate + polyamineSide 2 + [polyamine-binding protein]Side 1.. Part of the ABC transporter complex PotABCD involved in spermidine/putrescine import. Responsible for energy coupling to the transport system. This is Spermidine/putrescine import ATP-binding protein PotA from Bacillus thuringiensis (strain Al Hakam).